Here is a 153-residue protein sequence, read N- to C-terminus: FAD synthase (153 aa).

ATP contacts are provided by residues 9–10 (TF), 14–17 (HPGH), and Asp92.

Belongs to the archaeal FAD synthase family. In terms of assembly, homodimer. A divalent metal cation is required as a cofactor.

It catalyses the reaction FMN + ATP + H(+) = FAD + diphosphate. It functions in the pathway cofactor biosynthesis; FAD biosynthesis; FAD from FMN: step 1/1. Its function is as follows. Catalyzes the transfer of the AMP portion of ATP to flavin mononucleotide (FMN) to produce flavin adenine dinucleotide (FAD) coenzyme. This is FAD synthase from Halorubrum lacusprofundi (strain ATCC 49239 / DSM 5036 / JCM 8891 / ACAM 34).